Here is a 374-residue protein sequence, read N- to C-terminus: MAALTDADCLVVKIGSALLVDRDAGGLRQAWLASLAQDVAWLTRQGVKVVLVSSGSIALGRGILKLSDTDLPLEQAQAAAAVGQIRLARAYEEVLAPHGITTGQVLMTLDDSSNRRRYLNSRATLKQLLSMGVVPIVNENDTIATDEIRFGDNDRLAAQIAVTVGADQLVLLSDVDGFYSANPNIDPTAQRFDEIGEITPEIEDMAGDACSGLSKGGMKTKLMAAKIATAAGCRMAITEGVVLNPLRALNEGAAATWFRADTDPQAARKGWIAAMKPKGTVHLDSGALAALRSGKSLLPAGVSHITGHFQRGDPVAIADGAGHTVGHGLVRYTAEEAGRIMGRKSNEIESVLGYPARAALIHRDDMALTIQNGD.

An ATP-binding site is contributed by Lys13. Residues Ser54, Asp141, and Asn153 each coordinate substrate. Residue 173 to 174 coordinates ATP; the sequence is SD. Residues 278 to 355 enclose the PUA domain; sequence KGTVHLDSGA…NEIESVLGYP (78 aa).

It belongs to the glutamate 5-kinase family.

Its subcellular location is the cytoplasm. The catalysed reaction is L-glutamate + ATP = L-glutamyl 5-phosphate + ADP. It functions in the pathway amino-acid biosynthesis; L-proline biosynthesis; L-glutamate 5-semialdehyde from L-glutamate: step 1/2. Functionally, catalyzes the transfer of a phosphate group to glutamate to form L-glutamate 5-phosphate. The chain is Glutamate 5-kinase from Roseobacter denitrificans (strain ATCC 33942 / OCh 114) (Erythrobacter sp. (strain OCh 114)).